Consider the following 473-residue polypeptide: UDP-N-acetylmuramate--L-alanine ligase (473 aa).

114–120 (GTHGKTT) contacts ATP.

This sequence belongs to the MurCDEF family.

It localises to the cytoplasm. It catalyses the reaction UDP-N-acetyl-alpha-D-muramate + L-alanine + ATP = UDP-N-acetyl-alpha-D-muramoyl-L-alanine + ADP + phosphate + H(+). Its pathway is cell wall biogenesis; peptidoglycan biosynthesis. Functionally, cell wall formation. The polypeptide is UDP-N-acetylmuramate--L-alanine ligase (Chlorobium luteolum (strain DSM 273 / BCRC 81028 / 2530) (Pelodictyon luteolum)).